The sequence spans 124 residues: Ribonuclease pancreatic (124 aa).

Over residues 1 to 13 (KESAAAKFERQHM) the composition is skewed to basic and acidic residues. The disordered stretch occupies residues 1–24 (KESAAAKFERQHMDSSTSSASSSN). Residues K7 and R10 each contribute to the substrate site. H12 functions as the Proton acceptor in the catalytic mechanism. Intrachain disulfides connect C26–C84, C40–C95, C58–C110, and C65–C72. N-linked (GlcNAc...) asparagine; partial glycosylation occurs at N34. Residues 41–45 (KPVNT), K66, and R85 each bind substrate. H119 serves as the catalytic Proton donor.

This sequence belongs to the pancreatic ribonuclease family. Monomer. Interacts with and forms tight 1:1 complexes with RNH1. Dimerization of two such complexes may occur. Interaction with RNH1 inhibits this protein. As to expression, pancreas.

The protein resides in the secreted. It catalyses the reaction an [RNA] containing cytidine + H2O = an [RNA]-3'-cytidine-3'-phosphate + a 5'-hydroxy-ribonucleotide-3'-[RNA].. It carries out the reaction an [RNA] containing uridine + H2O = an [RNA]-3'-uridine-3'-phosphate + a 5'-hydroxy-ribonucleotide-3'-[RNA].. Endonuclease that catalyzes the cleavage of RNA on the 3' side of pyrimidine nucleotides. Acts on single-stranded and double-stranded RNA. In Aepyceros melampus (Impala), this protein is Ribonuclease pancreatic (RNASE1).